The chain runs to 281 residues: ATP phosphoribosyltransferase (281 aa).

The protein belongs to the ATP phosphoribosyltransferase family. Long subfamily. The cofactor is Mg(2+).

Its subcellular location is the cytoplasm. It catalyses the reaction 1-(5-phospho-beta-D-ribosyl)-ATP + diphosphate = 5-phospho-alpha-D-ribose 1-diphosphate + ATP. Its pathway is amino-acid biosynthesis; L-histidine biosynthesis; L-histidine from 5-phospho-alpha-D-ribose 1-diphosphate: step 1/9. Its activity is regulated as follows. Feedback inhibited by histidine. In terms of biological role, catalyzes the condensation of ATP and 5-phosphoribose 1-diphosphate to form N'-(5'-phosphoribosyl)-ATP (PR-ATP). Has a crucial role in the pathway because the rate of histidine biosynthesis seems to be controlled primarily by regulation of HisG enzymatic activity. This is ATP phosphoribosyltransferase from Corynebacterium efficiens (strain DSM 44549 / YS-314 / AJ 12310 / JCM 11189 / NBRC 100395).